The following is a 576-amino-acid chain: Proline--tRNA ligase (576 aa).

It belongs to the class-II aminoacyl-tRNA synthetase family. ProS type 1 subfamily. In terms of assembly, homodimer.

Its subcellular location is the cytoplasm. It catalyses the reaction tRNA(Pro) + L-proline + ATP = L-prolyl-tRNA(Pro) + AMP + diphosphate. Functionally, catalyzes the attachment of proline to tRNA(Pro) in a two-step reaction: proline is first activated by ATP to form Pro-AMP and then transferred to the acceptor end of tRNA(Pro). As ProRS can inadvertently accommodate and process non-cognate amino acids such as alanine and cysteine, to avoid such errors it has two additional distinct editing activities against alanine. One activity is designated as 'pretransfer' editing and involves the tRNA(Pro)-independent hydrolysis of activated Ala-AMP. The other activity is designated 'posttransfer' editing and involves deacylation of mischarged Ala-tRNA(Pro). The misacylated Cys-tRNA(Pro) is not edited by ProRS. This is Proline--tRNA ligase from Leptospira borgpetersenii serovar Hardjo-bovis (strain L550).